The sequence spans 179 residues: Small ribosomal subunit protein eS10x (179 aa).

The segment at 90–179 (TLKKSAKPGG…AAAPSGSGLP (90 aa)) is disordered. Positions 108–129 (DRSRGPRHEGGDRPRFGDRDGY) are enriched in basic and acidic residues. Over residues 134–144 (RAGGEFGGEKG) the composition is skewed to gly residues. The span at 145-156 (GAPADYQPSFQG) shows a compositional bias: low complexity. The segment covering 157 to 167 (SGRGFGRGAGG) has biased composition (gly residues). Residues 168 to 179 (YSAAAPSGSGLP) show a composition bias toward low complexity.

It belongs to the eukaryotic ribosomal protein eS10 family.

Its subcellular location is the cytoplasm. The sequence is that of Small ribosomal subunit protein eS10x (RPS10C) from Arabidopsis thaliana (Mouse-ear cress).